Consider the following 605-residue polypeptide: Elongation factor 4 (605 aa).

The tr-type G domain occupies 11 to 193 (KRIRNFSIIA…KVVSNIPSPR (183 aa)). GTP contacts are provided by residues 23-28 (DHGKST) and 140-143 (NKID).

It belongs to the TRAFAC class translation factor GTPase superfamily. Classic translation factor GTPase family. LepA subfamily.

The protein localises to the cell membrane. It carries out the reaction GTP + H2O = GDP + phosphate + H(+). Required for accurate and efficient protein synthesis under certain stress conditions. May act as a fidelity factor of the translation reaction, by catalyzing a one-codon backward translocation of tRNAs on improperly translocated ribosomes. Back-translocation proceeds from a post-translocation (POST) complex to a pre-translocation (PRE) complex, thus giving elongation factor G a second chance to translocate the tRNAs correctly. Binds to ribosomes in a GTP-dependent manner. The polypeptide is Elongation factor 4 (Phytoplasma mali (strain AT)).